Consider the following 200-residue polypeptide: 3-isopropylmalate dehydratase small subunit (200 aa).

Belongs to the LeuD family. LeuD type 1 subfamily. In terms of assembly, heterodimer of LeuC and LeuD.

It catalyses the reaction (2R,3S)-3-isopropylmalate = (2S)-2-isopropylmalate. The protein operates within amino-acid biosynthesis; L-leucine biosynthesis; L-leucine from 3-methyl-2-oxobutanoate: step 2/4. Its function is as follows. Catalyzes the isomerization between 2-isopropylmalate and 3-isopropylmalate, via the formation of 2-isopropylmaleate. The sequence is that of 3-isopropylmalate dehydratase small subunit from Aliivibrio salmonicida (strain LFI1238) (Vibrio salmonicida (strain LFI1238)).